The sequence spans 422 residues: NADH-quinone oxidoreductase subunit F (422 aa).

Residues 1 to 26 (MLKEEDKIFTNLHGQQSHDLKSSKKR) are disordered. Over residues 16 to 26 (QSHDLKSSKKR) the composition is skewed to basic and acidic residues. NAD(+) is bound at residue 54 to 63 (GRGGAGFSTG). 166-213 (GAGAYICGEETALLESLEGKKGMPRLKPPFPAGFGLYGCPTTINNVES) serves as a coordination point for FMN. The [4Fe-4S] cluster site is built by cysteine 344, cysteine 347, cysteine 350, and cysteine 390.

It belongs to the complex I 51 kDa subunit family. FMN serves as cofactor. [4Fe-4S] cluster is required as a cofactor.

The enzyme catalyses a quinone + NADH + 5 H(+)(in) = a quinol + NAD(+) + 4 H(+)(out). Its function is as follows. NDH-1 shuttles electrons from NADH, via FMN and iron-sulfur (Fe-S) centers, to quinones in the respiratory chain. Couples the redox reaction to proton translocation (for every two electrons transferred, four hydrogen ions are translocated across the cytoplasmic membrane), and thus conserves the redox energy in a proton gradient. The protein is NADH-quinone oxidoreductase subunit F (nuoF) of Rickettsia felis (strain ATCC VR-1525 / URRWXCal2) (Rickettsia azadi).